Here is a 459-residue protein sequence, read N- to C-terminus: Hemopexin (459 aa).

A signal peptide spans 1–23 (MARALRVPVALWLLGLCWSLAKA). Intrachain disulfides connect Cys52-Cys232, Cys150-Cys155, and Cys189-Cys201. 4 Hemopexin repeats span residues 55–95 (GWGF…WKDA), 96–140 (PSPV…FPGI), 141–185 (PFPL…SWPA), and 186–232 (VGNC…FMSC). His81 lines the heme pocket. Residue His151 coordinates heme. N-linked (GlcNAc...) asparagine glycosylation occurs at Asn188. A glycan (N-linked (GlcNAc...) asparagine) is linked at Asn218. Residue His237 participates in heme binding. An N-linked (GlcNAc...) asparagine glycan is attached at Asn241. 3 cysteine pairs are disulfide-bonded: Cys250/Cys453, Cys359/Cys401, and Cys411/Cys428. 4 Hemopexin repeats span residues 252–297 (PHLV…WPQG), 298–345 (PSTV…FGSP), 350–389 (LHSV…WTEL), and 393–444 (HTKV…LPQA). His286 lines the heme pocket.

Belongs to the hemopexin family.

The protein localises to the secreted. Binds heme and transports it to the liver for breakdown and iron recovery, after which the free hemopexin returns to the circulation. This chain is Hemopexin (HPX), found in Bos taurus (Bovine).